Reading from the N-terminus, the 226-residue chain is Triosephosphate isomerase (226 aa).

12–14 (NFK) provides a ligand contact to substrate. The Electrophile role is filled by histidine 96. Glutamate 144 functions as the Proton acceptor in the catalytic mechanism. Substrate is bound by residues isoleucine 149, glycine 184, and 205-206 (AS).

Belongs to the triosephosphate isomerase family. Homotetramer; dimer of dimers.

It is found in the cytoplasm. It carries out the reaction D-glyceraldehyde 3-phosphate = dihydroxyacetone phosphate. It functions in the pathway carbohydrate biosynthesis; gluconeogenesis. The protein operates within carbohydrate degradation; glycolysis; D-glyceraldehyde 3-phosphate from glycerone phosphate: step 1/1. Functionally, involved in the gluconeogenesis. Catalyzes stereospecifically the conversion of dihydroxyacetone phosphate (DHAP) to D-glyceraldehyde-3-phosphate (G3P). The polypeptide is Triosephosphate isomerase (Thermococcus kodakarensis (strain ATCC BAA-918 / JCM 12380 / KOD1) (Pyrococcus kodakaraensis (strain KOD1))).